We begin with the raw amino-acid sequence, 222 residues long: Probable RNA 2'-phosphotransferase (222 aa).

It belongs to the KptA/TPT1 family.

In terms of biological role, removes the 2'-phosphate from RNA via an intermediate in which the phosphate is ADP-ribosylated by NAD followed by a presumed transesterification to release the RNA and generate ADP-ribose 1''-2''-cyclic phosphate (APPR&gt;P). May function as an ADP-ribosylase. This chain is Probable RNA 2'-phosphotransferase, found in Haloarcula marismortui (strain ATCC 43049 / DSM 3752 / JCM 8966 / VKM B-1809) (Halobacterium marismortui).